A 98-amino-acid chain; its full sequence is NADH-ubiquinone oxidoreductase chain 4L (98 aa).

3 consecutive transmembrane segments (helical) span residues 1 to 21, 29 to 49, and 61 to 81; these read MSMVYFNIFMAFTVSFVGLLM, SLLCLEGMMLSLFVMMSMTIL, and IILLVFAACEAALGLSLLVMV.

Belongs to the complex I subunit 4L family. As to quaternary structure, core subunit of respiratory chain NADH dehydrogenase (Complex I) which is composed of 45 different subunits.

The protein resides in the mitochondrion inner membrane. It catalyses the reaction a ubiquinone + NADH + 5 H(+)(in) = a ubiquinol + NAD(+) + 4 H(+)(out). In terms of biological role, core subunit of the mitochondrial membrane respiratory chain NADH dehydrogenase (Complex I) which catalyzes electron transfer from NADH through the respiratory chain, using ubiquinone as an electron acceptor. Part of the enzyme membrane arm which is embedded in the lipid bilayer and involved in proton translocation. The sequence is that of NADH-ubiquinone oxidoreductase chain 4L (MT-ND4L) from Arctocephalus australis (South American fur seal).